We begin with the raw amino-acid sequence, 269 residues long: 3-ketodihydrosphingosine reductase (269 aa).

NADPH contacts are provided by G10, S12, S13, G14, K36, and D50. The GXSXG motif lies at 10 to 14; it reads GASSG. S12 (nucleophile; for lipase activity) is an active-site residue. The Proton donor role is filled by S128. Y142 functions as the Proton acceptor in the catalytic mechanism. 2 residues coordinate NADP(+): Y142 and K146. NADPH-binding positions include 142–146 and 175–177; these read YSASK and FNT. Residue K146 is part of the active site. The active-site Lowers pKa of active site Tyr is the K146.

Belongs to the short-chain dehydrogenases/reductases (SDR) family.

The enzyme catalyses sphinganine + NADP(+) = 3-oxosphinganine + NADPH + H(+). It functions in the pathway lipid metabolism; sphingolipid metabolism. Catalyzes the reduction of 3'-oxosphinganine (3-ketodihydrosphingosine/KDS) to sphinganine (dihydrosphingosine/DHS), the second step of de novo sphingolipid biosynthesis. This Bacteroides thetaiotaomicron (strain ATCC 29148 / DSM 2079 / JCM 5827 / CCUG 10774 / NCTC 10582 / VPI-5482 / E50) protein is 3-ketodihydrosphingosine reductase.